Here is a 263-residue protein sequence, read N- to C-terminus: Glucosamine-6-phosphate deaminase 2 (263 aa).

Aspartate 82 acts as the Proton acceptor; for enolization step in catalysis. The active-site For ring-opening step is asparagine 151. Residue histidine 153 is the Proton acceptor; for ring-opening step of the active site. Catalysis depends on glutamate 158, which acts as the For ring-opening step.

It belongs to the glucosamine/galactosamine-6-phosphate isomerase family. Homohexamer.

It catalyses the reaction alpha-D-glucosamine 6-phosphate + H2O = beta-D-fructose 6-phosphate + NH4(+). Functionally, catalyzes the reversible conversion of alpha-D-glucosamine 6-phosphate (GlcN-6P) into beta-D-fructose 6-phosphate (Fru-6P) and ammonium ion, a regulatory reaction step in de novo uridine diphosphate-N-acetyl-alpha-D-glucosamine (UDP-GlcNAc) biosynthesis via hexosamine pathway. In Giardia intestinalis (Giardia lamblia), this protein is Glucosamine-6-phosphate deaminase 2 (GPI2).